We begin with the raw amino-acid sequence, 413 residues long: Adenylosuccinate synthetase (413 aa).

GTP contacts are provided by residues 11-17 and 39-41; these read GDEGKGK and GHT. The active-site Proton acceptor is aspartate 12. Aspartate 12 and glycine 39 together coordinate Mg(2+). IMP-binding positions include 12–15, 37–40, threonine 125, arginine 139, glutamine 217, threonine 232, and arginine 296; these read DEGK and NAGH. Residue histidine 40 is the Proton donor of the active site. 292–298 contributes to the substrate binding site; sequence TTTGRPR. GTP contacts are provided by residues arginine 298, 324 to 326, and 402 to 404; these read KLD and STG.

This sequence belongs to the adenylosuccinate synthetase family. Homodimer. Mg(2+) serves as cofactor.

The protein resides in the cytoplasm. The catalysed reaction is IMP + L-aspartate + GTP = N(6)-(1,2-dicarboxyethyl)-AMP + GDP + phosphate + 2 H(+). Its pathway is purine metabolism; AMP biosynthesis via de novo pathway; AMP from IMP: step 1/2. In terms of biological role, plays an important role in the de novo pathway of purine nucleotide biosynthesis. Catalyzes the first committed step in the biosynthesis of AMP from IMP. In Nautilia profundicola (strain ATCC BAA-1463 / DSM 18972 / AmH), this protein is Adenylosuccinate synthetase.